An 892-amino-acid chain; its full sequence is DNA replication licensing factor mcm6 (892 aa).

Phosphoserine is present on residues S96 and S98. An MCM domain is found at I426 to V633. Residue G476–S483 participates in ATP binding. The short motif at S608 to D611 is the Arginine finger element. A compositionally biased stretch (acidic residues) spans E748–N758. Residues E748–E774 are disordered. Residues D759–N769 are compositionally biased toward low complexity.

The protein belongs to the MCM family. Component of the mcm2-7 complex. The complex forms a toroidal hexameric ring with the proposed subunit order mcm2-mcm6-mcm4-mcm7-mcm3-mcm5. The heterodimers of mcm4/mcm6 and mcm3/mcm5 interact with mcm2 and mcm7. Interacts with sld3.

The protein localises to the nucleus. The catalysed reaction is ATP + H2O = ADP + phosphate + H(+). In terms of biological role, acts as a component of the mcm2-7 complex (mcm complex) which is the putative replicative helicase essential for 'once per cell cycle' DNA replication initiation and elongation in eukaryotic cells. The active ATPase sites in the mcm2-7 ring are formed through the interaction surfaces of two neighboring subunits such that a critical structure of a conserved arginine finger motif is provided in trans relative to the ATP-binding site of the Walker A box of the adjacent subunit. The six ATPase active sites, however, are likely to contribute differentially to the complex helicase activity. The chain is DNA replication licensing factor mcm6 (mcm6) from Schizosaccharomyces pombe (strain 972 / ATCC 24843) (Fission yeast).